A 476-amino-acid polypeptide reads, in one-letter code: Zinc metalloproteinase/disintegrin (476 aa).

A signal peptide spans 1–20 (MIQVLLVIICLADFPYQGTS). A propeptide spanning residues 21–184 (IILESGNVND…KSDEPIKASQ (164 aa)) is cleaved from the precursor. Gln-185 is subject to Pyrrolidone carboxylic acid. One can recognise a Peptidase M12B domain in the interval 191 to 387 (RYIELVVVAD…RNPQCILNEP (197 aa)). Residues Glu-194 and Asp-278 each coordinate Ca(2+). Cystine bridges form between Cys-302-Cys-382, Cys-342-Cys-366, and Cys-344-Cys-349. Residue His-327 coordinates Zn(2+). Residue Glu-328 is part of the active site. Zn(2+) contacts are provided by His-331 and His-337. Ca(2+)-binding residues include Cys-382 and Asn-385. A propeptide spanning residues 388-403 (LRTDTVSTPVSGNELL) is cleaved from the precursor. The 82-residue stretch at 395–476 (TPVSGNELLE…AGCPRNGFYG (82 aa)) folds into the Disintegrin domain. 6 disulfide bridges follow: Cys-409–Cys-424, Cys-411–Cys-419, Cys-418–Cys-441, Cys-432–Cys-438, Cys-437–Cys-462, and Cys-450–Cys-469. Positions 454–456 (KGD) match the Cell attachment site motif.

Belongs to the venom metalloproteinase (M12B) family. P-II subfamily. P-IId sub-subfamily. In terms of assembly, homodimer; disulfide-linked (disintegrin). Zn(2+) serves as cofactor. As to expression, expressed by the venom gland.

It is found in the secreted. The metalloproteinase is inhibited by EDTA, o-phenanthroline, and cysteine. Glutathione does not inhibit the enzymatic activity. In terms of biological role, shows weak degradation of alpha-fibrinogen, but has no activity on beta- and gamma-chains. Digests luteinizing hormone-releasing hormone (LH-RH) and oxidized insulin at X-Leu, X-Phe, and X-Val bonds as well as X-His bond. Does not show fibrinogen-clotting activity. Does not show hemorrhagic activity. Its function is as follows. Inhibits ADP-induced platelet aggregation. This is Zinc metalloproteinase/disintegrin from Gloydius brevicauda (Korean slamosa snake).